A 546-amino-acid chain; its full sequence is Cation/calcium exchanger 5 (546 aa).

The next 13 helical transmembrane spans lie at 13-33 (ALCLTLISILIFFFLTTTTIP), 88-108 (NLFFSIPILSLLILLHFYILI), 134-154 (AVTLLALGNGAPDVFASVAAL), 163-183 (FGAILSAGTFVSAFVVGFVAI), 194-214 (SFVRDVLFYLIAALFLFYVYL), 218-238 (IFVWQAIGFVGFYIFFVGFVF), 323-343 (SANIVFCPFALLYTCNSFVQL), 356-376 (LPLWLVVLFMTSSLAFLHFTV), 388-408 (VIVVAFIMSVFWISTIAGELL), 423-445 (ALLGLTVLAWGNSVGDLVADVAV), 455-475 (MAGCFAGPMFNMLVGLGSALV), 492-512 (VGIVIAFVFLLLSLMGSLLVI), and 522-542 (FWGICLVGLYVAFTFVSLIIA).

This sequence belongs to the Ca(2+):cation antiporter (CaCA) (TC 2.A.19) family. Cation/calcium exchanger (CCX) subfamily.

It localises to the cell membrane. Membrane-localized H(+)-dependent K(+) and Na(+) transporter. The polypeptide is Cation/calcium exchanger 5 (CCX5) (Arabidopsis thaliana (Mouse-ear cress)).